Here is a 289-residue protein sequence, read N- to C-terminus: ATP synthase subunit a (289 aa).

Transmembrane regions (helical) follow at residues 43 to 63, 103 to 123, 160 to 180, 193 to 213, 232 to 252, and 259 to 279; these read AFHLDTLGWSVALGLIFLFIF, VIAPLALTIFVWVFLMNAVDL, FCVFALIIFYSIKVKGLGGFI, IFVQILLIPVNFLLEFVTLIA, VFILIAVMFGSGLLWLSGLGV, and AVFHILIITLQAFIFMMLTIV.

Belongs to the ATPase A chain family. As to quaternary structure, F-type ATPases have 2 components, CF(1) - the catalytic core - and CF(0) - the membrane proton channel. CF(1) has five subunits: alpha(3), beta(3), gamma(1), delta(1), epsilon(1). CF(0) has three main subunits: a(1), b(2) and c(9-12). The alpha and beta chains form an alternating ring which encloses part of the gamma chain. CF(1) is attached to CF(0) by a central stalk formed by the gamma and epsilon chains, while a peripheral stalk is formed by the delta and b chains.

Its subcellular location is the cell inner membrane. In terms of biological role, key component of the proton channel; it plays a direct role in the translocation of protons across the membrane. In Pseudomonas putida (strain GB-1), this protein is ATP synthase subunit a.